The sequence spans 457 residues: Adenylosuccinate synthetase (457 aa).

Residues 45–51 and 73–75 contribute to the GTP site; these read GDEGKGK and GHT. D46 (proton acceptor) is an active-site residue. Residues D46 and G73 each contribute to the Mg(2+) site. IMP is bound by residues 46–49, 71–74, T163, R177, N255, T270, and R334; these read DEGK and NAGH. H74 (proton donor) is an active-site residue. 330-336 is a substrate binding site; that stretch reads VTTKRVR. GTP contacts are provided by residues R336, 362–364, and 444–446; these read KLD and GVG.

It belongs to the adenylosuccinate synthetase family. As to quaternary structure, homodimer. It depends on Mg(2+) as a cofactor.

It localises to the cytoplasm. The catalysed reaction is IMP + L-aspartate + GTP = N(6)-(1,2-dicarboxyethyl)-AMP + GDP + phosphate + 2 H(+). The protein operates within purine metabolism; AMP biosynthesis via de novo pathway; AMP from IMP: step 1/2. Its function is as follows. Plays an important role in the de novo pathway and in the salvage pathway of purine nucleotide biosynthesis. Catalyzes the first committed step in the biosynthesis of AMP from IMP. The protein is Adenylosuccinate synthetase of Aedes aegypti (Yellowfever mosquito).